The primary structure comprises 75 residues: UPF0291 protein LMOf2365_1322 (75 aa).

The disordered stretch occupies residues 56–75 (DPNGTDVTPHKVKQLRKNKH). Residues 65-75 (HKVKQLRKNKH) are compositionally biased toward basic residues.

This sequence belongs to the UPF0291 family.

Its subcellular location is the cytoplasm. This Listeria monocytogenes serotype 4b (strain F2365) protein is UPF0291 protein LMOf2365_1322.